The sequence spans 341 residues: MAVERDVADVFVYAKLSGLCARLWVGERLGTLQGVGTLCDLWVRLFSEPAPRSAGAHLVGLIQRRVEACLLRDCVRAASCYQEPPSLFSALLARYDYLYLKTLSSSESQAGFRVCQPPDLGRFSLFRWEKWPCIEAVTRGSPVSWYNRVPRSDERVLWDLRLDQSYYHALWQTLCSIPEDDRTACSRLVREEVALYAVGWVLRLRMFYGVQKKDAPSELSSNGAIRRCLGTWWKCILFAWDCSLTERGAWSGWRYERFLNNPVDGVQWEPDLDAFERAGSRFLYCLARTVFHAQLFTPATIVAFFMMKRFEARGICALAECIHAGSARTLPREFLGEAAYV.

This is an uncharacterized protein from Treponema pallidum (strain Nichols).